Here is a 564-residue protein sequence, read N- to C-terminus: Membrane protein insertase YidC (564 aa).

Residues 7–24 traverse the membrane as a helical segment; the sequence is VLWVVFSFSLLMLWDNYN. The segment covering 43-60 has biased composition (low complexity); sequence KPAAATDDGKTAAAPTAD. A disordered region spans residues 43-76; the sequence is KPAAATDDGKTAAAPTADVPTSSAHAANATGVPD. The next 6 membrane-spanning stretches (helical) occupy residues 293–313, 341–361, 364–384, 438–458, 483–503, and 524–544; these read LATN…APGA, VKDY…MIQI, LLGN…LAFF, MPIV…LASV, IGSF…SMFI, and PIAF…YWVV.

This sequence belongs to the OXA1/ALB3/YidC family. Type 1 subfamily. Interacts with the Sec translocase complex via SecD. Specifically interacts with transmembrane segments of nascent integral membrane proteins during membrane integration.

Its subcellular location is the cell inner membrane. Its function is as follows. Required for the insertion and/or proper folding and/or complex formation of integral membrane proteins into the membrane. Involved in integration of membrane proteins that insert both dependently and independently of the Sec translocase complex, as well as at least some lipoproteins. Aids folding of multispanning membrane proteins. The sequence is that of Membrane protein insertase YidC from Janthinobacterium sp. (strain Marseille) (Minibacterium massiliensis).